Consider the following 396-residue polypeptide: Putative cystathionine beta-lyase (396 aa).

Lysine 210 carries the post-translational modification N6-(pyridoxal phosphate)lysine.

Belongs to the trans-sulfuration enzymes family. Pyridoxal 5'-phosphate is required as a cofactor.

The catalysed reaction is L,L-cystathionine + H2O = L-homocysteine + pyruvate + NH4(+). The enzyme catalyses an S-substituted L-cysteine + H2O = a thiol + pyruvate + NH4(+). The protein operates within amino-acid biosynthesis; L-methionine biosynthesis via de novo pathway; L-homocysteine from L-cystathionine: step 1/1. Functionally, catalyzes the cleavage of cystathionine to homocysteine, pyruvate and ammonia during methionine biosynthesis. The chain is Putative cystathionine beta-lyase (metC) from Rhizobium johnstonii (strain DSM 114642 / LMG 32736 / 3841) (Rhizobium leguminosarum bv. viciae).